The chain runs to 147 residues: Large ribosomal subunit protein uL11 (147 aa).

The protein belongs to the universal ribosomal protein uL11 family. As to quaternary structure, part of the ribosomal stalk of the 50S ribosomal subunit. Interacts with L10 and the large rRNA to form the base of the stalk. L10 forms an elongated spine to which L12 dimers bind in a sequential fashion forming a multimeric L10(L12)X complex. In terms of processing, one or more lysine residues are methylated.

Functionally, forms part of the ribosomal stalk which helps the ribosome interact with GTP-bound translation factors. This Thermus thermophilus (strain ATCC BAA-163 / DSM 7039 / HB27) protein is Large ribosomal subunit protein uL11.